The following is an 895-amino-acid chain: Clathrin interactor EPSIN 2 (895 aa).

The ENTH domain occupies 18-150 (KKVLKVPGVE…NDKERIAEVR (133 aa)). Composition is skewed to basic and acidic residues over residues 150 to 161 (RQKAAANRDKYR), 177 to 236 (DKYD…RSRS), and 245 to 257 (RSSEREREDDGHS). Positions 150 to 396 (RQKAAANRDK…PTVTSMSAPT (247 aa)) are disordered. 2 positions are modified to phosphoserine: serine 270 and serine 282. Over residues 329–348 (AAPEAASPPTGTNTANTTAT) the composition is skewed to low complexity. Polar residues-rich tracts occupy residues 349–358 (FVNESPSQKV) and 387–396 (PTVTSMSAPT). The short motif at 409 to 413 (LADVF) is the Clathrin binding element. 2 disordered regions span residues 436 to 533 (AGPA…PQEQ) and 758 to 784 (KQTNTPATSTINMGKAMGSGTGLGRSG). Positions 440 to 454 (PSFSTSQPSTQSFDD) are enriched in low complexity. Residues 454-456 (DPF) carry the ALPHA-ADR binding motif. 3 stretches are compositionally biased toward polar residues: residues 464-479 (FTSTDTDSTPQQNFGA), 515-533 (PASQNVQPPSNSPGFPQEQ), and 759-769 (QTNTPATSTIN).

Belongs to the epsin family. In terms of assembly, interacts with clathrin, VTI12, DELTA-ADR and ALPHA-ADR.

The protein localises to the golgi apparatus. It is found in the cytoplasmic vesicle. The protein resides in the clathrin-coated vesicle. May have a role in transport via clathrin-coated vesicles from the trans-Golgi network to endosomes. Stimulates clathrin assembly. Binds to membranes enriched in phosphatidylinositol 3-phosphate (PtdIns(3)P). Plays an important role in protein trafficking. This Arabidopsis thaliana (Mouse-ear cress) protein is Clathrin interactor EPSIN 2 (EPSIN2).